We begin with the raw amino-acid sequence, 97 residues long: Ig heavy chain V region 914 (97 aa).

The region spanning 1–97 is the Ig-like domain; it reads EVKLVESGGG…EDTAMYYCAR (97 aa).

The polypeptide is Ig heavy chain V region 914 (Mus musculus (Mouse)).